A 20-amino-acid polypeptide reads, in one-letter code: Thrombin-like enzyme Cdc SII (20 aa).

Belongs to the peptidase S1 family. Snake venom subfamily. As to quaternary structure, monomer. As to expression, expressed by the venom gland.

It is found in the secreted. Strongly inhibited by PMSF and moderately inhibited by leupeptin. Not inhibited by EDTA, aprotinin, pepstatin, and bestatin. Its function is as follows. Thrombin-like snake venom serine protease that coagulates human plasma and bovine fibrinogen by hydrolysis of the alpha chains (FGA) (minimum coagulation dose is 60 ug on fibrinogen). Has fibrinogenolytic activities, and degrades preferentially the Aalpha chain (FGA). Shows amidolytic activity toward N-benzoyl-L-Arg-p-nitroanilide, has a higher activity than Cdc SI. In vivo, intravenous injection induces defibrin(ogen)ation and a loss of the righting reflex and opisthotoxins, together with a typical gyroxin-like effect (18-20 minutes). Subcutaneous injection into the footpads induces moderate edema. Potentiates local hemorrhagic activity induced by metalloproteinases (BaP1). The polypeptide is Thrombin-like enzyme Cdc SII (Crotalus durissus cumanensis (South American rattlesnake)).